A 209-amino-acid chain; its full sequence is Ribosomal RNA large subunit methyltransferase E (209 aa).

The S-adenosyl-L-methionine site is built by glycine 63, tryptophan 65, aspartate 83, aspartate 99, and aspartate 124. The active-site Proton acceptor is the lysine 164. One can recognise a TRAM domain in the interval 191 to 209 (EASRGRSREVYIVAMGYMG).

It belongs to the class I-like SAM-binding methyltransferase superfamily. RNA methyltransferase RlmE family.

It is found in the cytoplasm. It carries out the reaction uridine(2552) in 23S rRNA + S-adenosyl-L-methionine = 2'-O-methyluridine(2552) in 23S rRNA + S-adenosyl-L-homocysteine + H(+). Functionally, specifically methylates the uridine in position 2552 of 23S rRNA at the 2'-O position of the ribose in the fully assembled 50S ribosomal subunit. The chain is Ribosomal RNA large subunit methyltransferase E from Histophilus somni (strain 129Pt) (Haemophilus somnus).